The chain runs to 693 residues: ATP-dependent DNA helicase RecG (693 aa).

The tract at residues 48 to 146 (THLYPIGELL…GDLSTPELQE (99 aa)) is wedge domain. Residues 283-448 (DMALDVPMMR…AYADLDTSVI (166 aa)) form the Helicase ATP-binding domain. 296–303 (GDVGSGKT) contacts ATP. Positions 397-400 (DEQH) match the DEAH box motif. Residues 482–628 (EGRQAYWVCT…GFVIAQKDLE (147 aa)) form the Helicase C-terminal domain.

It belongs to the helicase family. RecG subfamily. Monomer in solution. Probably a monomer on HJ DNA. Binding to fork DNA is facilitated by SSB; the proteins do not seem to stably associate. Mg(2+) serves as cofactor.

The enzyme catalyses Couples ATP hydrolysis with the unwinding of duplex DNA by translocating in the 3'-5' direction.. It carries out the reaction ATP + H2O = ADP + phosphate + H(+). Plays a critical role in recombination and DNA repair. Helps process Holliday junction (HJ) intermediates to mature products by catalyzing branch migration. Has replication fork regression activity, unwinds stalled or blocked replication forks to make a HJ that can be resolved by RuvC or RusA. Also rewinds unwound dsDNA in an ATP-dependent manner. Has double-stranded (ds)DNA unwinding activity characteristic of a DNA helicase with 3'-5' polarity in vitro on linear dsDNA; branched duplex DNA (Y-DNA) substrates adopt different conformations that influence which of the two arms are unwound. Binds and unwinds HJ and Y-DNA but not linear duplex DNA; binds no more than 10 nucleotides of ssDNA at a fork. Has a role in constitutive stable DNA replication (cSDR, DNA replication in the absence of protein synthesis) and R-loop (RNA annealed with dsDNA) formation. Unwinds R-loops but not RNA:DNA hybrids. Is genetically synergistic to RadA and RuvABC. The sequence is that of ATP-dependent DNA helicase RecG from Escherichia coli (strain K12).